Reading from the N-terminus, the 129-residue chain is ATP synthase epsilon chain (129 aa).

Belongs to the ATPase epsilon chain family. As to quaternary structure, F-type ATPases have 2 components, CF(1) - the catalytic core - and CF(0) - the membrane proton channel. CF(1) has five subunits: alpha(3), beta(3), gamma(1), delta(1), epsilon(1). CF(0) has three main subunits: a, b and c.

It localises to the cell inner membrane. In terms of biological role, produces ATP from ADP in the presence of a proton gradient across the membrane. The polypeptide is ATP synthase epsilon chain (Campylobacter jejuni subsp. jejuni serotype O:2 (strain ATCC 700819 / NCTC 11168)).